Here is a 91-residue protein sequence, read N- to C-terminus: Small ribosomal subunit protein uS19 (91 aa).

It belongs to the universal ribosomal protein uS19 family.

Protein S19 forms a complex with S13 that binds strongly to the 16S ribosomal RNA. The chain is Small ribosomal subunit protein uS19 from Leptothrix cholodnii (strain ATCC 51168 / LMG 8142 / SP-6) (Leptothrix discophora (strain SP-6)).